The chain runs to 180 residues: MKGGKRVQTARPNRINSEIRAQEVRLTGLEGEQLGIVSLREALEKTEEAGVDLVEISPNAEPPVCRIMDYGKFLYEKSKSSKEQKKKQKVIQVKEIKFRPGTDEGDYQVKLRSLIRFLEEGDKAKITLRFRGREMAHQQIGMEVLNRVKDDLQELAVVESFPTKIEGRQMIMVLAPKKKQ.

The protein belongs to the IF-3 family. As to quaternary structure, monomer.

The protein resides in the cytoplasm. Functionally, IF-3 binds to the 30S ribosomal subunit and shifts the equilibrium between 70S ribosomes and their 50S and 30S subunits in favor of the free subunits, thus enhancing the availability of 30S subunits on which protein synthesis initiation begins. The polypeptide is Translation initiation factor IF-3 (Salmonella paratyphi A (strain ATCC 9150 / SARB42)).